The primary structure comprises 435 residues: Monodehydroascorbate reductase 2 (435 aa).

FAD-binding positions include glycine 14–alanine 17, glutamate 41, arginine 48, lysine 53, isoleucine 96, and arginine 147–glutamate 148. NAD(+) contacts are provided by residues glycine 172 to glutamate 178, glutamate 196, arginine 202, and glycine 261. Tyrosine 174–glutamate 178 contacts NADP(+). Arginine 202 and glycine 261 together coordinate NADP(+). An FAD-binding site is contributed by aspartate 298. Glutamate 314–histidine 315 provides a ligand contact to NAD(+). Glutamate 314–histidine 315 contributes to the NADP(+) binding site. Valine 316 is an FAD binding site. Arginine 320 serves as a coordination point for L-ascorbate. Residue tyrosine 349 participates in FAD binding. Tyrosine 349 contributes to the NAD(+) binding site. Position 349 (tyrosine 349) interacts with NADP(+). Arginine 351 contacts L-ascorbate. At serine 417 the chain carries Phosphoserine.

It belongs to the FAD-dependent oxidoreductase family. FAD serves as cofactor.

It localises to the cytoplasm. The enzyme catalyses 2 monodehydro-L-ascorbate radical + NADH + H(+) = 2 L-ascorbate + NAD(+). Functionally, catalyzes the conversion of monodehydroascorbate to ascorbate, oxidizing NADH in the process. In Arabidopsis thaliana (Mouse-ear cress), this protein is Monodehydroascorbate reductase 2.